The following is a 77-amino-acid chain: Putative sulfur carrier protein YedF (77 aa).

Catalysis depends on C17, which acts as the Cysteine persulfide intermediate.

It belongs to the sulfur carrier protein TusA family.

In Escherichia coli O157:H7, this protein is Putative sulfur carrier protein YedF (yedF).